The chain runs to 277 residues: MAIRLYRAYTPGTRNRSVPKFDEIVKCQPQKKLTYNKHIKKGRNNRGIITSQHRGGGHKRLYRKIDFQRNKKYITGKIKTIEYDPNRNTYICLINYEDGEKRYILYPRGIKLDDTIISSEEAPILIGNTLPLTNMPLGTAIHNIEITPGKGGQLVRAAGTVAKIIAKEGQLVTLRLPSGEIRLISQKCLATIGQIGNVDVNNLRIGKAGSKRWLGKRPKVRGVVMNPIDHPHGGGEGRAPIGRKKPLTPWGHPALGKRSRKNNKYSDTLILRRRKNS.

The tract at residues 223-277 (VVMNPIDHPHGGGEGRAPIGRKKPLTPWGHPALGKRSRKNNKYSDTLILRRRKNS) is disordered.

This sequence belongs to the universal ribosomal protein uL2 family. In terms of assembly, part of the 50S ribosomal subunit.

It is found in the plastid. Its subcellular location is the chloroplast. This chain is Large ribosomal subunit protein uL2c (rpl2), found in Marchantia polymorpha (Common liverwort).